A 55-amino-acid chain; its full sequence is Protein SOX-19 (55 aa).

The HMG box DNA-binding region spans 1-55; that stretch reads MVWSQIERRKIMEQWPDMHNAEISKRLGKRWKLLPDYEKIPFIKEAERLRLKHMA.

Its subcellular location is the nucleus. This chain is Protein SOX-19 (Sox19), found in Mus musculus (Mouse).